A 337-amino-acid chain; its full sequence is Peptide methionine sulfoxide reductase MsrA/MsrB (337 aa).

The peptide methionine sulfoxide reductase A stretch occupies residues 28-181; the sequence is KDIYLAGGCF…PGGYCHVDLS (154 aa). The active site involves cysteine 36. One can recognise a MsrB domain in the interval 198–321; the sequence is KDELKAKLSD…NGASLKFIPL (124 aa). Residue cysteine 310 is the Nucleophile of the active site.

It in the N-terminal section; belongs to the MsrA Met sulfoxide reductase family. This sequence in the C-terminal section; belongs to the MsrB Met sulfoxide reductase family.

The catalysed reaction is L-methionyl-[protein] + [thioredoxin]-disulfide + H2O = L-methionyl-(S)-S-oxide-[protein] + [thioredoxin]-dithiol. The enzyme catalyses [thioredoxin]-disulfide + L-methionine + H2O = L-methionine (S)-S-oxide + [thioredoxin]-dithiol. It catalyses the reaction L-methionyl-[protein] + [thioredoxin]-disulfide + H2O = L-methionyl-(R)-S-oxide-[protein] + [thioredoxin]-dithiol. In terms of biological role, has an important function as a repair enzyme for proteins that have been inactivated by oxidation. Catalyzes the reversible oxidation-reduction of methionine sulfoxide in proteins to methionine. This Campylobacter fetus protein is Peptide methionine sulfoxide reductase MsrA/MsrB (msrAB).